The primary structure comprises 276 residues: Short-chain dehydrogenase/reductase ATR10 (276 aa).

NADP(+)-binding residues include isoleucine 29, serine 51, aspartate 78, and asparagine 105. Serine 161 (proton donor) is an active-site residue. Residues lysine 185 and threonine 214 each contribute to the NADP(+) site. The Lowers pKa of active site Tyr role is filled by lysine 185.

The protein belongs to the short-chain dehydrogenases/reductases (SDR) family.

It functions in the pathway mycotoxin biosynthesis. In terms of biological role, short-chain dehydrogenase/reductase; part of the core atranone cluster (CAC) which products are predicted to catalyze most or all steps of mycotoxin atranone synthesis, starting from geranylgeranyl pyrophosphate (GGPP). The initial cyclization of GGPP to dolabellane is probably performed by the terpene cyclase ATR13. The Baeyer-Villiger oxidation near the end of the atranone synthesis, which converts atranones D and E to atranones F and G is predicted to be catalyzed by the monooxygenase ATR8. Of the CAC's other predicted gene products, the reducing PKS ATR6 might synthesize a polyketide chain. This polyketide is probably transferred onto the atranone backbone by the polyketide transferase ATR5. Other predicted CAC products include 4 oxygenases (ATR2, ATR3, ATR4, and ATR14), 3 short-chain reductases (ATR7, ATR9, and ATR10), and a methyltransferase (ATR12). These may all be involved in the various steps of atranone biosynthesis, although their specific roles must await experimental determination. This Stachybotrys chlorohalonatus (strain IBT 40285) protein is Short-chain dehydrogenase/reductase ATR10.